We begin with the raw amino-acid sequence, 270 residues long: 4-hydroxy-tetrahydrodipicolinate reductase (270 aa).

NAD(+) is bound by residues 9–14 and Glu35; that span reads GAGGRM. Position 36 (Arg36) interacts with NADP(+). NAD(+) contacts are provided by residues 99–101 and 123–126; these read GTT and ASNY. The active-site Proton donor/acceptor is the His156. His157 contacts (S)-2,3,4,5-tetrahydrodipicolinate. Catalysis depends on Lys160, which acts as the Proton donor. 166-167 provides a ligand contact to (S)-2,3,4,5-tetrahydrodipicolinate; the sequence is GT.

The protein belongs to the DapB family.

Its subcellular location is the cytoplasm. It catalyses the reaction (S)-2,3,4,5-tetrahydrodipicolinate + NAD(+) + H2O = (2S,4S)-4-hydroxy-2,3,4,5-tetrahydrodipicolinate + NADH + H(+). It carries out the reaction (S)-2,3,4,5-tetrahydrodipicolinate + NADP(+) + H2O = (2S,4S)-4-hydroxy-2,3,4,5-tetrahydrodipicolinate + NADPH + H(+). Its pathway is amino-acid biosynthesis; L-lysine biosynthesis via DAP pathway; (S)-tetrahydrodipicolinate from L-aspartate: step 4/4. Its function is as follows. Catalyzes the conversion of 4-hydroxy-tetrahydrodipicolinate (HTPA) to tetrahydrodipicolinate. This is 4-hydroxy-tetrahydrodipicolinate reductase from Histophilus somni (strain 129Pt) (Haemophilus somnus).